The chain runs to 71 residues: MSNKMTGLVKWFNADKGFGFISPVDGSKDVFVHFSAIQNDNYRTLFEGQKVTFSIESGAKGPAAANVIITD.

The region spanning 7–67 (GLVKWFNADK…GAKGPAAANV (61 aa)) is the CSD domain.

The protein localises to the cytoplasm. This chain is Cold shock-like protein CspB (cspB), found in Escherichia coli (strain K12).